The following is a 498-amino-acid chain: Pentatricopeptide repeat-containing protein At2g15980 (498 aa).

PPR repeat units lie at residues 244 to 274 (NATT…MEEE), 280 to 314 (NVYS…GVVY), 315 to 349 (DIVA…GIEC), 350 to 384 (TCLT…GFEA), 385 to 423 (DGLT…MFYP), 424 to 458 (SRNC…GFKP), and 459 to 489 (SQET…MAES).

This sequence belongs to the PPR family. P subfamily.

The sequence is that of Pentatricopeptide repeat-containing protein At2g15980 from Arabidopsis thaliana (Mouse-ear cress).